Consider the following 495-residue polypeptide: MLEHFCECYFNLSGLILCPVLGSIILLFIPNSRIRLIRLIGLCASLITFLYSLVLWIQFDSSTAKFQFVESLRWLPYENINFYLGIDGISLFFVILTTFLIPICILVGWSGMRSYGKEYIIAFLICEFLMIAVFCMLDLLLFYVFFESVLIPMFIIIGVWGSRQRKIKAAYQFFLYTLLGSLFMLLAILLILFQTGTTDLQILLTTEFSERRQIFLWIAFFASFAVKVPMVPVHIWLPEAHVEAPTAGSVILAGILLKFGTYGFLRFSIPMFPEATLCFTPFIYTLSAIAIIYTSLTTLRQIDLKKIIAYSSVAHMNLVTIGMFSLNIQGIGGSILLMLSHGLVSSALFLCVGVLYDRHKTRLVRYYGGLVSTMPNFSTIFFFFTLANMSLPGTSSFIGEFLILVGAFQRNSLVATLAALGMILGAAYSLWLYNRVVSGNLKPDFLHKFSDLNGREVFIFIPFLVGVVWMGVYPKVFLDCMHTSVSNLVQHGKFH.

The next 12 membrane-spanning stretches (helical) occupy residues 9–29, 39–59, 89–109, 118–138, 173–193, 214–234, 245–265, 272–292, 335–355, 367–387, 413–433, and 457–477; these read YFNL…LLFI, LIGL…WIQF, ISLF…LVGW, EYII…CMLD, FFLY…LILF, IFLW…VPVH, PTAG…YGFL, FPEA…IAII, ILLM…VGVL, YGGL…FTLA, LVAT…LWLY, and VFIF…PKVF.

The protein belongs to the complex I subunit 4 family. Complex I is composed of at least 49 different subunits.

It localises to the mitochondrion inner membrane. It catalyses the reaction a ubiquinone + NADH + 5 H(+)(in) = a ubiquinol + NAD(+) + 4 H(+)(out). In terms of biological role, core subunit of the mitochondrial membrane respiratory chain NADH dehydrogenase (Complex I) that is believed to belong to the minimal assembly required for catalysis. Complex I functions in the transfer of electrons from NADH to the respiratory chain. The immediate electron acceptor for the enzyme is believed to be ubiquinone. The sequence is that of NADH-ubiquinone oxidoreductase chain 4 (ND4) from Arabidopsis thaliana (Mouse-ear cress).